Reading from the N-terminus, the 535-residue chain is Light-independent protochlorophyllide reductase subunit B (535 aa).

Asp-36 is a [4Fe-4S] cluster binding site. Asp-292 serves as the catalytic Proton donor. Gly-428 to Leu-429 is a binding site for substrate.

This sequence belongs to the ChlB/BchB/BchZ family. In terms of assembly, protochlorophyllide reductase is composed of three subunits; BchL, BchN and BchB. Forms a heterotetramer of two BchB and two BchN subunits. Requires [4Fe-4S] cluster as cofactor.

It carries out the reaction chlorophyllide a + oxidized 2[4Fe-4S]-[ferredoxin] + 2 ADP + 2 phosphate = protochlorophyllide a + reduced 2[4Fe-4S]-[ferredoxin] + 2 ATP + 2 H2O. The protein operates within porphyrin-containing compound metabolism; bacteriochlorophyll biosynthesis (light-independent). Functionally, component of the dark-operative protochlorophyllide reductase (DPOR) that uses Mg-ATP and reduced ferredoxin to reduce ring D of protochlorophyllide (Pchlide) to form chlorophyllide a (Chlide). This reaction is light-independent. The NB-protein (BchN-BchB) is the catalytic component of the complex. The chain is Light-independent protochlorophyllide reductase subunit B from Pelodictyon phaeoclathratiforme (strain DSM 5477 / BU-1).